A 580-amino-acid polypeptide reads, in one-letter code: Alpha-thujene synthase TPS3, chloroplastic (580 aa).

A chloroplast-targeting transit peptide spans 1–26 (MALQLLTPSFSFQHSPSPHRLTTLRY). (2E)-geranyl diphosphate is bound by residues arginine 296, aspartate 333, aspartate 337, arginine 473, and aspartate 476. Aspartate 333 and aspartate 337 together coordinate Mg(2+). The DDXXD motif motif lies at 333 to 337 (DDVYD). Positions 476, 480, and 484 each coordinate Mg(2+).

This sequence belongs to the terpene synthase family. Tpsb subfamily. Monomer. Mg(2+) is required as a cofactor. Requires Mn(2+) as cofactor. Mostly expressed in developing and mature fruits, and, to a lower extent, in male leaves. Barely detectable in female leaves and shoots.

The protein localises to the plastid. Its subcellular location is the chloroplast. The enzyme catalyses (2E)-geranyl diphosphate = alpha-thujene + diphosphate. The catalysed reaction is (2E)-geranyl diphosphate = (1R,5R)-sabinene + diphosphate. Its pathway is secondary metabolite biosynthesis; terpenoid biosynthesis. Monoterpene synthase (TPS) involved in the biosynthesis of monoterpene natural products used by traditional Chinese medicine to treat headache, inflammation and intoxication. Catalyzes the conversion of (2E)-geranyl diphosphate (GPP) into alpha-thujene and (1R,5R)-sabinene. This chain is Alpha-thujene synthase TPS3, chloroplastic, found in Litsea cubeba (Aromatic litsea).